The primary structure comprises 300 residues: Porphobilinogen deaminase (300 aa).

Residue cysteine 239 is modified to S-(dipyrrolylmethanemethyl)cysteine.

It belongs to the HMBS family. In terms of assembly, monomer. Requires dipyrromethane as cofactor.

The enzyme catalyses 4 porphobilinogen + H2O = hydroxymethylbilane + 4 NH4(+). The protein operates within porphyrin-containing compound metabolism; protoporphyrin-IX biosynthesis; coproporphyrinogen-III from 5-aminolevulinate: step 2/4. In terms of biological role, tetrapolymerization of the monopyrrole PBG into the hydroxymethylbilane pre-uroporphyrinogen in several discrete steps. The chain is Porphobilinogen deaminase from Francisella philomiragia subsp. philomiragia (strain ATCC 25017 / CCUG 19701 / FSC 153 / O#319-036).